We begin with the raw amino-acid sequence, 260 residues long: FAS1 domain-containing protein SELMODRAFT_448915 (260 aa).

Residues 1 to 35 (MRRTGRSYKPLLSQLKDHHIPVHPSSRAERAMESR) lie on the Cytoplasmic side of the membrane. A helical transmembrane segment spans residues 36-58 (TLLVLLFVGVVTIVSSGLERAAA). The 140-residue stretch at 59–198 (QDDTDDGILP…IACHGIDRVL (140 aa)) folds into the FAS1 domain. Over 59 to 260 (QDDTDDGILP…SSASRYPVSE (202 aa)) the chain is Extracellular. N-linked (GlcNAc...) asparagine glycans are attached at residues asparagine 118, asparagine 169, asparagine 176, asparagine 201, asparagine 236, and asparagine 247. Residues 210 to 260 (PEASPPFGAEQASPAPEALPPGTRSPNNTANPSNRKSNSTRSSASRYPVSE) form a disordered region. A compositionally biased stretch (polar residues) spans 233–254 (RSPNNTANPSNRKSNSTRSSAS).

Its subcellular location is the membrane. In Selaginella moellendorffii (Spikemoss), this protein is FAS1 domain-containing protein SELMODRAFT_448915.